The following is a 509-amino-acid chain: Transmembrane protein 104 homolog (509 aa).

Topologically, residues 1 to 19 (MPRLVNGREAAPTYSNLVG) are cytoplasmic. A helical membrane pass occupies residues 20-40 (FIFIFNLIVGTGALTLPGVFA). The Extracellular segment spans residues 41–45 (RAGWM). A helical transmembrane segment spans residues 46 to 66 (LSLIVIVLLAIISYMTVTFII). Topologically, residues 67 to 151 (EAMACANAIR…ATLFFNEFGR (85 aa)) are cytoplasmic. Residues 152-172 (VMFYLCLIVYLYGDLSIYSAA) form a helical membrane-spanning segment. Topologically, residues 173–218 (VARSLRDVVCDQTNGTDTNNLMYWPGDFENNTSLACWKEHTISRLN) are extracellular. 3 N-linked (GlcNAc...) asparagine glycosylation sites follow: Asn-186, Asn-202, and Asn-203. Residues 219 to 239 (MYRVLLIGFTLIFGPFVYFNV) traverse the membrane as a helical segment. Over 240–248 (QKTKYLQML) the chain is Cytoplasmic. Residues 249–269 (TAAFRWMAFTLMICISLKLLI) traverse the membrane as a helical segment. Over 270 to 277 (SRGAKGHP) the chain is Extracellular. Residues 278–298 (ATFNVYGIPSLFGACVYSFMC) traverse the membrane as a helical segment. The Cytoplasmic segment spans residues 299–320 (HHSLPSLLAPIRHKSMVSKILS). Residues 321-341 (IDYIIICAFYILLAMTGIFAF) traverse the membrane as a helical segment. Residues 342–361 (ERIEDLYTLDFLPYDVAYVD) lie on the Extracellular side of the membrane. Residues 362-382 (FWSGLLICIDYFLALFPIFTL) traverse the membrane as a helical segment. The Cytoplasmic segment spans residues 383–411 (STSFPIVAITLKNNLQSLFLDMSQYESYS). Residues 412 to 432 (VILRLCFPLLAIIPPFCITYF) form a helical membrane-spanning segment. The Extracellular portion of the chain corresponds to 433-439 (TESLSSL). The helical transmembrane segment at 440-460 (VAFTGTYAGTGIQYIIPVFLV) threads the bilayer. Residues 461–487 (YFARRTCSELLGSGVVNRFKSPFKSSA) lie on the Cytoplasmic side of the membrane. Residues 488–508 (WLVFVFIWSILCVCLVSINLF) form a helical membrane-spanning segment. Ser-509 is a topological domain (extracellular).

The protein belongs to the TMEM104 family.

The protein resides in the membrane. This chain is Transmembrane protein 104 homolog, found in Drosophila melanogaster (Fruit fly).